The sequence spans 1134 residues: MGLLASAGLLLLLVIGHPRSLGLKCGIRMVNMKSKEPAVGSRFFSRISSWRNSTVTGHPWQVSLKSDEHHFCGGSLIQEDRVVTAAHCLDSLSEKQLKNITVTSGEYSLFQKDKQEQNIPVSKIITHPEYNSREYMSPDIALLYLKHKVKFGNAVQPICLPDSDDKVEPGILCLSSGWGKISKTSEYSNVLQEMELPIMDDRACNTVLKSMNLPPLGRTMLCAGFPDWGMDACQGDSGGPLVCRRGGGIWILAGITSWVAGCAGGSVPVRNNHVKASLGIFSKVSELMDFITQNLFTGLDRGQPLSKVGSRYITKALSSVQEVNGSQRGKGILDMEKQVGCDHDYVSLRSSSGVLFNQRSLMEDDGKQNKRVCGKILPSPLLAETSEAMVPFVSDTEDSGSGFELTVTAVQKSEAGSGCGSLAILVEEGTNHSAKYPDLYPSNTRCHWFICAPEKHIIKLTFEDFAVKFSPNCIYDAVVIYGDSEEKHKLAKLCGMLTITSIFSSSNMTVIYFKSDGKNRLQGFKARFTILPSESLNKFEPKLPPQNNPVSTVKAILHDVCGIPPFSPQWLSRRIAGGEEACPHCWPWQVGLRFLGDYQCGGAIINPVWILTAAHCVQLKNNPLSWTIIAGDHDRNLKESTEQVRRAKHIIVHEDFNTLSYDSDIALIQLSSPLEYNSVVRPVCLPHSAEPLFSSEICAVTGWGSISADGGLASRLQQIQVHVLEREVCEHTYYSAHPGGITEKMICAGFAASGEKDFCQGDSGGPLVCRHENGPFVLYGIVSWGAGCVQPWKPGVFARVMIFLDWIQSKINGPASLQTNNKCKTLKQQLPPPTPSPDSASWPGCCSEAELEKPRGFFPTPRYLLDYRGRLECSWVLRVSASSMAKFTIEYLSLLGSPVCQDSVLIIYEERHSKRKTAGGLHGRRLYSMTFMSPGPLVRVTFHALVRGAFGISYIVLKVLGPKDSKITRLSQSSNREHLVPCEDVLLTKPEGIMQIPRNSHRTTMGCQWRLVAPLNHIIQLNIINFPMKPTTFVCHGHLRVYEGFGPGKKLIASFAGTLAMILTKDILKREKLNFINTYIMHIWENSVYDNVRSVGKRKQKKFASNLSYSMEAEKSRIQVPADLVPAKGSLSGS.

The N-terminal stretch at 1–22 (MGLLASAGLLLLLVIGHPRSLG) is a signal peptide. Residues 23–46 (LKCGIRMVNMKSKEPAVGSRFFSR) constitute a propeptide, activation peptide. Residues 38–296 (AVGSRFFSRI…LMDFITQNLF (259 aa)) enclose the Peptidase S1 1 domain. N-linked (GlcNAc...) asparagine glycosylation occurs at asparagine 52. Cysteine 72 and cysteine 88 are oxidised to a cystine. Histidine 87 serves as the catalytic Charge relay system. N-linked (GlcNAc...) asparagine glycosylation occurs at asparagine 99. Ca(2+) is bound at residue glutamate 116. The active-site Charge relay system is aspartate 139. Intrachain disulfides connect cysteine 173/cysteine 243, cysteine 204/cysteine 222, and cysteine 233/cysteine 262. The active-site Charge relay system is the serine 237. CUB domains are found at residues 284-410 (VSEL…VTAV) and 419-531 (CGSL…FTIL). Residue asparagine 324 is glycosylated (N-linked (GlcNAc...) asparagine). Cystine bridges form between cysteine 341/cysteine 373, cysteine 419/cysteine 446, and cysteine 473/cysteine 494. Residue asparagine 431 is glycosylated (N-linked (GlcNAc...) asparagine). Asparagine 507 carries N-linked (GlcNAc...) asparagine glycosylation. The Peptidase S1 2 domain maps to 575–812 (IAGGEEACPH…FLDWIQSKIN (238 aa)). Cysteines 600 and 616 form a disulfide. Active-site charge relay system residues include histidine 615 and aspartate 664. 4 disulfides stabilise this stretch: cysteine 698–cysteine 769, cysteine 729–cysteine 747, cysteine 759–cysteine 788, and cysteine 846–cysteine 873. The active-site Charge relay system is serine 763. A CUB 3 domain is found at 846–957 (CSEAELEKPR…GAFGISYIVL (112 aa)). The N-linked (GlcNAc...) asparagine glycan is linked to asparagine 1106.

It belongs to the peptidase S1 family.

It is found in the secreted. This Homo sapiens (Human) protein is Ovochymase-1 (OVCH1).